Here is a 503-residue protein sequence, read N- to C-terminus: Lysine--tRNA ligase (503 aa).

Residues Glu413 and Glu420 each coordinate Mg(2+).

This sequence belongs to the class-II aminoacyl-tRNA synthetase family. In terms of assembly, homodimer. It depends on Mg(2+) as a cofactor.

The protein localises to the cytoplasm. It carries out the reaction tRNA(Lys) + L-lysine + ATP = L-lysyl-tRNA(Lys) + AMP + diphosphate. The sequence is that of Lysine--tRNA ligase from Actinobacillus succinogenes (strain ATCC 55618 / DSM 22257 / CCUG 43843 / 130Z).